A 208-amino-acid polypeptide reads, in one-letter code: 3-demethoxyubiquinol 3-hydroxylase (208 aa).

Fe cation-binding residues include glutamate 57, glutamate 87, histidine 90, glutamate 139, glutamate 171, and histidine 174.

The protein belongs to the COQ7 family. It depends on Fe cation as a cofactor.

The protein resides in the cell membrane. The catalysed reaction is a 5-methoxy-2-methyl-3-(all-trans-polyprenyl)benzene-1,4-diol + AH2 + O2 = a 3-demethylubiquinol + A + H2O. It functions in the pathway cofactor biosynthesis; ubiquinone biosynthesis. Catalyzes the hydroxylation of 2-nonaprenyl-3-methyl-6-methoxy-1,4-benzoquinol during ubiquinone biosynthesis. The polypeptide is 3-demethoxyubiquinol 3-hydroxylase (Burkholderia cenocepacia (strain HI2424)).